The chain runs to 284 residues: 4-diphosphocytidyl-2-C-methyl-D-erythritol kinase (284 aa).

Lys22 is a catalytic residue. Residue 104 to 114 (PVGAGLGGASS) coordinates ATP. Residue Asp146 is part of the active site.

It belongs to the GHMP kinase family. IspE subfamily.

The enzyme catalyses 4-CDP-2-C-methyl-D-erythritol + ATP = 4-CDP-2-C-methyl-D-erythritol 2-phosphate + ADP + H(+). It participates in isoprenoid biosynthesis; isopentenyl diphosphate biosynthesis via DXP pathway; isopentenyl diphosphate from 1-deoxy-D-xylulose 5-phosphate: step 3/6. Catalyzes the phosphorylation of the position 2 hydroxy group of 4-diphosphocytidyl-2C-methyl-D-erythritol. The sequence is that of 4-diphosphocytidyl-2-C-methyl-D-erythritol kinase from Hydrogenobaculum sp. (strain Y04AAS1).